We begin with the raw amino-acid sequence, 40 residues long: Bomanin Short 6 (40 aa).

Positions 1-18 (MKLLSITFLFGLLALASA) are cleaved as a signal peptide. Positions 19-23 (NPLSP) are cleaved as a propeptide — removed by a dipeptidylpeptidase. An intrachain disulfide couples Cys-32 to Cys-35.

This sequence belongs to the bomanin family.

The protein resides in the secreted. Secreted immune-induced peptide induced by Toll signaling. Has a role in resistance to bacterial and fungal infections. The strength of antimicrobial activity appears to correlate with the overall level of expression. The chain is Bomanin Short 6 from Drosophila melanogaster (Fruit fly).